Reading from the N-terminus, the 489-residue chain is Aklavinone 12-hydroxylase DnrF (489 aa).

FAD-binding positions include Leu17–Gly18, Glu37, Gln121, and Leu145. The Proton acceptor role is filled by Tyr224. Residue Asp308 participates in FAD binding. Residue Gly317 participates in aklavinone binding. Residues Val402 to His428 are disordered.

This sequence belongs to the PheA/TfdB FAD monooxygenase family. As to quaternary structure, monomer. FAD serves as cofactor.

It catalyses the reaction aklavinone + NADPH + O2 + H(+) = epsilon-rhodomycinone + NADP(+) + H2O. It participates in antibiotic biosynthesis; daunorubicin biosynthesis. Its pathway is antibiotic biosynthesis; carminomycin biosynthesis. The protein operates within antibiotic biosynthesis; rhodomycin biosynthesis. It functions in the pathway antibiotic biosynthesis; doxorubicin biosynthesis. Functionally, involved in the biosynthesis of the anthracyclines carminomycin, rhodomycin, daunorubicin (daunomycin) and doxorubicin (adriamycin) which are aromatic polyketide antibiotics that exhibit high cytotoxicity and are widely applied in the chemotherapy of a variety of cancers. Catalyzes the incorporation of a hydroxyl group at position C-11 of aklavinone, resulting in epsilon-rhodomycinone. This chain is Aklavinone 12-hydroxylase DnrF (dnrF), found in Streptomyces peucetius subsp. caesius.